A 366-amino-acid chain; its full sequence is Cobalt-precorrin-5B C(1)-methyltransferase (366 aa).

This sequence belongs to the CbiD family.

The enzyme catalyses Co-precorrin-5B + S-adenosyl-L-methionine = Co-precorrin-6A + S-adenosyl-L-homocysteine. Its pathway is cofactor biosynthesis; adenosylcobalamin biosynthesis; cob(II)yrinate a,c-diamide from sirohydrochlorin (anaerobic route): step 6/10. In terms of biological role, catalyzes the methylation of C-1 in cobalt-precorrin-5B to form cobalt-precorrin-6A. The chain is Cobalt-precorrin-5B C(1)-methyltransferase from Thermus thermophilus (strain ATCC BAA-163 / DSM 7039 / HB27).